The chain runs to 83 residues: Cytochrome b559 subunit alpha (83 aa).

Residues 21-35 form a helical membrane-spanning segment; it reads VIHSITIPSLFIAGW. His23 serves as a coordination point for heme.

Belongs to the PsbE/PsbF family. In terms of assembly, heterodimer of an alpha subunit and a beta subunit. PSII is composed of 1 copy each of membrane proteins PsbA, PsbB, PsbC, PsbD, PsbE, PsbF, PsbH, PsbI, PsbJ, PsbK, PsbL, PsbM, PsbT, PsbX, PsbY, PsbZ, Psb30/Ycf12, at least 3 peripheral proteins of the oxygen-evolving complex and a large number of cofactors. It forms dimeric complexes. Requires heme b as cofactor.

Its subcellular location is the plastid. It is found in the chloroplast thylakoid membrane. This b-type cytochrome is tightly associated with the reaction center of photosystem II (PSII). PSII is a light-driven water:plastoquinone oxidoreductase that uses light energy to abstract electrons from H(2)O, generating O(2) and a proton gradient subsequently used for ATP formation. It consists of a core antenna complex that captures photons, and an electron transfer chain that converts photonic excitation into a charge separation. This chain is Cytochrome b559 subunit alpha, found in Adiantum capillus-veneris (Maidenhair fern).